A 352-amino-acid chain; its full sequence is Holliday junction branch migration complex subunit RuvB (352 aa).

Positions 13–201 (LPLRKKELRL…FGISQKIEFY (189 aa)) are large ATPase domain (RuvB-L). ATP-binding positions include Arg-41, Gly-82, Lys-85, Thr-86, Thr-87, 148–150 (EDF), Arg-191, Tyr-201, and Arg-238. Residue Thr-86 participates in Mg(2+) binding. Positions 202–273 (NYDELKQILL…LIKKALNSYQ (72 aa)) are small ATPAse domain (RuvB-S). The head domain (RuvB-H) stretch occupies residues 276–352 (DKGLDSLDRH…KYIDSKNDDF (77 aa)). DNA-binding residues include Arg-330 and Arg-335.

The protein belongs to the RuvB family. In terms of assembly, homohexamer. Forms an RuvA(8)-RuvB(12)-Holliday junction (HJ) complex. HJ DNA is sandwiched between 2 RuvA tetramers; dsDNA enters through RuvA and exits via RuvB. An RuvB hexamer assembles on each DNA strand where it exits the tetramer. Each RuvB hexamer is contacted by two RuvA subunits (via domain III) on 2 adjacent RuvB subunits; this complex drives branch migration. In the full resolvosome a probable DNA-RuvA(4)-RuvB(12)-RuvC(2) complex forms which resolves the HJ.

It localises to the cytoplasm. It catalyses the reaction ATP + H2O = ADP + phosphate + H(+). Its function is as follows. The RuvA-RuvB-RuvC complex processes Holliday junction (HJ) DNA during genetic recombination and DNA repair, while the RuvA-RuvB complex plays an important role in the rescue of blocked DNA replication forks via replication fork reversal (RFR). RuvA specifically binds to HJ cruciform DNA, conferring on it an open structure. The RuvB hexamer acts as an ATP-dependent pump, pulling dsDNA into and through the RuvAB complex. RuvB forms 2 homohexamers on either side of HJ DNA bound by 1 or 2 RuvA tetramers; 4 subunits per hexamer contact DNA at a time. Coordinated motions by a converter formed by DNA-disengaged RuvB subunits stimulates ATP hydrolysis and nucleotide exchange. Immobilization of the converter enables RuvB to convert the ATP-contained energy into a lever motion, pulling 2 nucleotides of DNA out of the RuvA tetramer per ATP hydrolyzed, thus driving DNA branch migration. The RuvB motors rotate together with the DNA substrate, which together with the progressing nucleotide cycle form the mechanistic basis for DNA recombination by continuous HJ branch migration. Branch migration allows RuvC to scan DNA until it finds its consensus sequence, where it cleaves and resolves cruciform DNA. This is Holliday junction branch migration complex subunit RuvB from Prochlorococcus marinus (strain MIT 9301).